The chain runs to 333 residues: Transcription factor MYB36 (333 aa).

HTH myb-type domains lie at 9–62 (KANV…LNYL) and 63–117 (RPNI…KKKL). 2 DNA-binding regions (H-T-H motif) span residues 38-62 (WIAL…LNYL) and 90-113 (WSII…NTKL). The interval 119–150 (GRQKQMNRQDSITDSTENNLSNNNNNKSPQNL) is disordered. Over residues 122 to 135 (KQMNRQDSITDSTE) the composition is skewed to polar residues. Over residues 136–150 (NNLSNNNNNKSPQNL) the composition is skewed to low complexity.

In terms of tissue distribution, expressed in leaves, roots (endodermis-specific) and seedlings.

It localises to the nucleus. Transcription factors that activates genes required for endodermal differentiation but represses genes involved in proliferative divisions, thus regulating the transition from proliferation to differentiation in root endodermis. Required for Casparian strip formation by positively regulating the expression of the Casparian strip genes CASP1, PER64 and ESB1 and other endodermis-specific genes, thus triggering correct localized lignin biosynthesis in root endodermis and subsequently regulating global ion homeostasis. The protein is Transcription factor MYB36 of Arabidopsis thaliana (Mouse-ear cress).